The primary structure comprises 450 residues: D-inositol 3-phosphate glycosyltransferase (450 aa).

H21 contributes to the 1D-myo-inositol 3-phosphate binding site. UDP-N-acetyl-alpha-D-glucosamine-binding positions include 27-28 (QP) and G35. Residues 32–37 (DAGGMN), K90, Y123, T147, and R167 each bind 1D-myo-inositol 3-phosphate. Residues R241, K246, and V307 each coordinate UDP-N-acetyl-alpha-D-glucosamine. Residues Y316, R317, and A319 each coordinate Mg(2+). UDP-N-acetyl-alpha-D-glucosamine contacts are provided by E329 and E337. T343 provides a ligand contact to Mg(2+).

Belongs to the glycosyltransferase group 1 family. MshA subfamily. Homodimer.

The enzyme catalyses 1D-myo-inositol 3-phosphate + UDP-N-acetyl-alpha-D-glucosamine = 1D-myo-inositol 2-acetamido-2-deoxy-alpha-D-glucopyranoside 3-phosphate + UDP + H(+). Its function is as follows. Catalyzes the transfer of a N-acetyl-glucosamine moiety to 1D-myo-inositol 3-phosphate to produce 1D-myo-inositol 2-acetamido-2-deoxy-glucopyranoside 3-phosphate in the mycothiol biosynthesis pathway. The polypeptide is D-inositol 3-phosphate glycosyltransferase (Geodermatophilus obscurus (strain ATCC 25078 / DSM 43160 / JCM 3152 / CCUG 61914 / KCC A-0152 / KCTC 9177 / NBRC 13315 / NRRL B-3577 / G-20)).